Here is a 238-residue protein sequence, read N- to C-terminus: uncharacterized protein (238 aa).

The Response regulatory domain occupies 3–116 (RVIIVDDEQP…RLAKTLTRLS (114 aa)). Asp54 is subject to 4-aspartylphosphate. Residues 136-237 (IPCSGHNRIF…LKSLKEKLGI (102 aa)) form the HTH LytTR-type domain.

This is an uncharacterized protein from Yersinia pestis.